The following is a 365-amino-acid chain: UDP-N-acetylglucosamine--N-acetylmuramyl-(pentapeptide) pyrophosphoryl-undecaprenol N-acetylglucosamine transferase (365 aa).

Residues threonine 17–glycine 19, asparagine 129, arginine 167, serine 194, isoleucine 250, alanine 269–glutamate 274, and glutamine 295 contribute to the UDP-N-acetyl-alpha-D-glucosamine site.

This sequence belongs to the glycosyltransferase 28 family. MurG subfamily.

It is found in the cell inner membrane. It catalyses the reaction di-trans,octa-cis-undecaprenyl diphospho-N-acetyl-alpha-D-muramoyl-L-alanyl-D-glutamyl-meso-2,6-diaminopimeloyl-D-alanyl-D-alanine + UDP-N-acetyl-alpha-D-glucosamine = di-trans,octa-cis-undecaprenyl diphospho-[N-acetyl-alpha-D-glucosaminyl-(1-&gt;4)]-N-acetyl-alpha-D-muramoyl-L-alanyl-D-glutamyl-meso-2,6-diaminopimeloyl-D-alanyl-D-alanine + UDP + H(+). It participates in cell wall biogenesis; peptidoglycan biosynthesis. Its function is as follows. Cell wall formation. Catalyzes the transfer of a GlcNAc subunit on undecaprenyl-pyrophosphoryl-MurNAc-pentapeptide (lipid intermediate I) to form undecaprenyl-pyrophosphoryl-MurNAc-(pentapeptide)GlcNAc (lipid intermediate II). In Shewanella piezotolerans (strain WP3 / JCM 13877), this protein is UDP-N-acetylglucosamine--N-acetylmuramyl-(pentapeptide) pyrophosphoryl-undecaprenol N-acetylglucosamine transferase.